The chain runs to 409 residues: Elongation factor 1-gamma (409 aa).

The GST N-terminal domain maps to 2-81; the sequence is SVGTVYGKIG…YLASLNKTRA (80 aa). The region spanning 86-212 is the GST C-terminal domain; sequence TAEEKAKVLQ…EPLKFIDQPL (127 aa). A compositionally biased stretch (basic and acidic residues) spans 219–248; it reads NKEAAPAKKAEKKKDEKKKNAPKPQAERPA. The interval 219–261 is disordered; that stretch reads NKEAAPAKKAEKKKDEKKKNAPKPQAERPAKPPKHPLASAPNG. The EF-1-gamma C-terminal domain maps to 251 to 409; the sequence is PKHPLASAPN…REVADGKVCK (159 aa).

EF-1 is composed of four subunits: alpha, beta, delta, and gamma.

Functionally, probably plays a role in anchoring the complex to other cellular components. This Schizosaccharomyces pombe (strain 972 / ATCC 24843) (Fission yeast) protein is Elongation factor 1-gamma (tef3).